A 260-amino-acid polypeptide reads, in one-letter code: Adenosylcobinamide-GDP ribazoletransferase (260 aa).

7 consecutive transmembrane segments (helical) span residues 42-62, 64-84, 117-137, 144-164, 192-212, 214-234, and 240-260; these read PLAGGILGLLAGVALLIANAI, LPPLAAALIAIGALAAMTGAL, FAALTLVIWTSVKASLLMAII, YALLALIGTEAASRAGMLAFW, GLGLALLAIGFLPSGGMVALI, ALVLMTVVLFGFARLCMAKIG, and TLGAAQQIGSLAALIGLVMAL.

Belongs to the CobS family. It depends on Mg(2+) as a cofactor.

It localises to the cell inner membrane. The catalysed reaction is alpha-ribazole + adenosylcob(III)inamide-GDP = adenosylcob(III)alamin + GMP + H(+). It carries out the reaction alpha-ribazole 5'-phosphate + adenosylcob(III)inamide-GDP = adenosylcob(III)alamin 5'-phosphate + GMP + H(+). The protein operates within cofactor biosynthesis; adenosylcobalamin biosynthesis; adenosylcobalamin from cob(II)yrinate a,c-diamide: step 7/7. In terms of biological role, joins adenosylcobinamide-GDP and alpha-ribazole to generate adenosylcobalamin (Ado-cobalamin). Also synthesizes adenosylcobalamin 5'-phosphate from adenosylcobinamide-GDP and alpha-ribazole 5'-phosphate. This Brucella ovis (strain ATCC 25840 / 63/290 / NCTC 10512) protein is Adenosylcobinamide-GDP ribazoletransferase.